A 322-amino-acid polypeptide reads, in one-letter code: uncharacterized protein (322 aa).

Residues 1 to 17 (MASMAAAIAASRSAVMS) are compositionally biased toward low complexity. Residues 1–22 (MASMAAAIAASRSAVMSGNRPL) are disordered. An N-acetylalanine modification is found at Ala-2. The residue at position 37 (Ser-37) is a Phosphoserine. A disordered region spans residues 81–104 (AAAADAGDVRDPARFPGLRGPTGQ). Ser-130 is subject to Phosphoserine. Composition is skewed to polar residues over residues 142 to 153 (QEPSAATVTSDA) and 161 to 177 (QGTQ…SSSL). Residues 142–301 (QEPSAATVTS…DDDALFSEPA (160 aa)) form a disordered region. Phosphoserine is present on Ser-176. Residues 183–203 (ARKEEEAPFWKINAERSREGP) show a composition bias toward basic and acidic residues. Residues 245 to 255 (QEQQTLPSVSA) show a composition bias toward polar residues.

The protein resides in the cytoplasm. This is an uncharacterized protein from Mus musculus (Mouse).